A 332-amino-acid chain; its full sequence is Cell division protein ZipA (332 aa).

Over 1 to 6 the chain is Periplasmic; it reads MMQDLR. Residues 7–27 form a helical membrane-spanning segment; that stretch reads LILIVVGAIAIIALLLHGLWT. At 28-332 the chain is on the cytoplasmic side; it reads SRKERSSLFR…RIRDVLKANA (305 aa). The segment covering 40 to 51 has biased composition (basic and acidic residues); the sequence is PVKRAKKARDET. Positions 40–189 are disordered; that stretch reads PVKRAKKARD…VQPAPQQPAE (150 aa). Over residues 76–88 the composition is skewed to low complexity; it reads SFDSASVDSSSFD. Over residues 93–105 the composition is skewed to basic and acidic residues; sequence AREDVRSEAKSPF.

The protein belongs to the ZipA family. Interacts with FtsZ via their C-terminal domains.

It localises to the cell inner membrane. In terms of biological role, essential cell division protein that stabilizes the FtsZ protofilaments by cross-linking them and that serves as a cytoplasmic membrane anchor for the Z ring. Also required for the recruitment to the septal ring of downstream cell division proteins. The sequence is that of Cell division protein ZipA from Pectobacterium atrosepticum (strain SCRI 1043 / ATCC BAA-672) (Erwinia carotovora subsp. atroseptica).